The sequence spans 460 residues: 3-ketoacyl-CoA synthase 7 (460 aa).

Residues 21–41 (FHQFLVASACVLIAVFGYYFF) form a helical membrane-spanning segment. Positions 38 to 328 (YYFFKPRCII…YIISFIQRKW (291 aa)) constitute an FAE domain. Catalysis depends on residues Cys-183, His-262, His-345, His-349, and Asn-382.

This sequence belongs to the thiolase-like superfamily. Chalcone/stilbene synthases family. As to expression, expressed in flowers.

It localises to the membrane. It catalyses the reaction a very-long-chain acyl-CoA + malonyl-CoA + H(+) = a very-long-chain 3-oxoacyl-CoA + CO2 + CoA. It participates in lipid metabolism; fatty acid biosynthesis. The protein is 3-ketoacyl-CoA synthase 7 of Arabidopsis thaliana (Mouse-ear cress).